The following is a 252-amino-acid chain: Chitooligosaccharide deacetylase (252 aa).

The Mg(2+) site is built by His-61 and His-125.

It belongs to the YdjC deacetylase family. ChbG subfamily. As to quaternary structure, homodimer. It depends on Mg(2+) as a cofactor.

It localises to the cytoplasm. It catalyses the reaction N,N'-diacetylchitobiose + H2O = N-acetyl-beta-D-glucosaminyl-(1-&gt;4)-D-glucosamine + acetate. The catalysed reaction is diacetylchitobiose-6'-phosphate + H2O = N'-monoacetylchitobiose-6'-phosphate + acetate. It participates in glycan degradation; chitin degradation. In terms of biological role, involved in the degradation of chitin. ChbG is essential for growth on the acetylated chitooligosaccharides chitobiose and chitotriose but is dispensable for growth on cellobiose and chitosan dimer, the deacetylated form of chitobiose. Deacetylation of chitobiose-6-P and chitotriose-6-P is necessary for both the activation of the chb promoter by the regulatory protein ChbR and the hydrolysis of phosphorylated beta-glucosides by the phospho-beta-glucosidase ChbF. Catalyzes the removal of only one acetyl group from chitobiose-6-P to yield monoacetylchitobiose-6-P, the inducer of ChbR and the substrate of ChbF. The sequence is that of Chitooligosaccharide deacetylase from Citrobacter koseri (strain ATCC BAA-895 / CDC 4225-83 / SGSC4696).